The primary structure comprises 381 residues: Putative F-box protein At3g17500 (381 aa).

The F-box domain occupies 1–45 (MMSNLPLDLVEEILSRVPATSLKRLRSTCKSWNNCYKDQRFTEKH).

This Arabidopsis thaliana (Mouse-ear cress) protein is Putative F-box protein At3g17500.